Here is a 362-residue protein sequence, read N- to C-terminus: Phosphoserine aminotransferase (362 aa).

Residues Ser-9 and Arg-42 each contribute to the L-glutamate site. Pyridoxal 5'-phosphate is bound by residues 76–77 (AR), Trp-102, Thr-153, Asp-174, and Gln-197. N6-(pyridoxal phosphate)lysine is present on Lys-198. 239-240 (NT) serves as a coordination point for pyridoxal 5'-phosphate.

Belongs to the class-V pyridoxal-phosphate-dependent aminotransferase family. SerC subfamily. In terms of assembly, homodimer. Pyridoxal 5'-phosphate is required as a cofactor.

Its subcellular location is the cytoplasm. It catalyses the reaction O-phospho-L-serine + 2-oxoglutarate = 3-phosphooxypyruvate + L-glutamate. The catalysed reaction is 4-(phosphooxy)-L-threonine + 2-oxoglutarate = (R)-3-hydroxy-2-oxo-4-phosphooxybutanoate + L-glutamate. It functions in the pathway amino-acid biosynthesis; L-serine biosynthesis; L-serine from 3-phospho-D-glycerate: step 2/3. It participates in cofactor biosynthesis; pyridoxine 5'-phosphate biosynthesis; pyridoxine 5'-phosphate from D-erythrose 4-phosphate: step 3/5. In terms of biological role, catalyzes the reversible conversion of 3-phosphohydroxypyruvate to phosphoserine and of 3-hydroxy-2-oxo-4-phosphonooxybutanoate to phosphohydroxythreonine. The polypeptide is Phosphoserine aminotransferase (Photorhabdus laumondii subsp. laumondii (strain DSM 15139 / CIP 105565 / TT01) (Photorhabdus luminescens subsp. laumondii)).